Consider the following 539-residue polypeptide: uncharacterized protein (539 aa).

The disordered stretch occupies residues 34–63 (AASEVSPIPQERPTTSLRKPTPRVQRPATD). 11 helical membrane passes run 103–123 (FATP…TTVF), 141–161 (MTAT…LDTV), 184–204 (ILLL…GILL), 244–264 (GIFH…IFLN), 277–299 (FLGA…IIYI), 325–345 (LAVP…LVTF), 360–380 (VLST…AAAA), 399–419 (THVS…ILFL), 434–454 (VVAL…ADNT), 470–490 (IGGV…AIIL), and 496–516 (WGLY…AGVE).

It belongs to the multi antimicrobial extrusion (MATE) (TC 2.A.66.1) family.

It is found in the vacuole membrane. This is an uncharacterized protein from Schizosaccharomyces pombe (strain 972 / ATCC 24843) (Fission yeast).